The following is a 529-amino-acid chain: MGACAMNPQALKGSAMLAAAMLLASGAAMADVAPQAKAPTIAKELQQAKTYTISSPPTAPLEMAKPALPALSGYTDAAMEKKIVRAKPGKISIRRMMQEDALKDFIGGDNKMAEWVVRQHGIPQAIFIDDGYMNLKDLLGKVPKQYLSETSPGVFLAKLPIVVGRKGILEIDKKTQELRLSQEAGSFLINDGQLFVRDTKVTGWSEKANGPALYKSPKEFRPFLLAWGGTETYISNTKMASFGYANSKSYGVSISQYTPNMAKVLKRPEPTGWIIDSEFSDMWYGFYCYETTGFVIKGNTYKDNIVYGIDPHDRSHGLIIADNTVYGTKKKHGIIISREVNDSFIFNNRSYDNKLSGLVLDRNSVNNFVADNEFYRNHTDGITLYESGDNLLWGNKVIANRRHGIRVRNSVNIKLYENTSMANGLTGLYGHIKDLTDTDRDIALDPFDAKVSLIVVGGELAGNGSGPLSIDSPLSVELYRVSMLAPTKSSGISFNGVLGDRQEEILDLLVRQQKAVLIDPVERQTELQD.

Residues 1–30 (MGACAMNPQALKGSAMLAAAMLLASGAAMA) form the signal peptide. 6 PbH1 repeats span residues 229–256 (GTETYISNTKMASFGYANSKSYGVSISQ), 291–313 (TTGFVIKGNTYKDNIVYGIDPHD), 315–338 (SHGLIIADNTVYGTKKKHGIIISR), 340–362 (VNDSFIFNNRSYDNKLSGLVLDR), 364–386 (SVNNFVADNEFYRNHTDGITLYE), and 387–409 (SGDNLLWGNKVIANRRHGIRVRN). His312 acts as the Proton acceptor in catalysis.

Belongs to the D-mannuronate C5-epimerase family.

It is found in the periplasm. The enzyme catalyses [(1-&gt;4)-beta-D-mannuronosyl](n) = [alginate](n). It functions in the pathway glycan biosynthesis; alginate biosynthesis. Catalyzes the epimerization of beta-D-mannuronate to alpha-L-guluronate during the synthesis of the linear polysaccharide alginate. In addition, is part of a periplasmic protein complex that protects alginate from degradation by AlgL by channeling the newly formed alginate polymer through a scaffold that transfers the alginate polymer through the periplasmic space to the outer membrane secretin AlgE. The polypeptide is Mannuronan C5-epimerase (Pseudomonas fluorescens).